Here is a 249-residue protein sequence, read N- to C-terminus: tRNA pseudouridine synthase A (249 aa).

Asp53 acts as the Nucleophile in catalysis. Position 111 (Tyr111) interacts with substrate.

Belongs to the tRNA pseudouridine synthase TruA family. In terms of assembly, homodimer.

It catalyses the reaction uridine(38/39/40) in tRNA = pseudouridine(38/39/40) in tRNA. Formation of pseudouridine at positions 38, 39 and 40 in the anticodon stem and loop of transfer RNAs. The chain is tRNA pseudouridine synthase A from Streptococcus pneumoniae (strain Taiwan19F-14).